Reading from the N-terminus, the 177-residue chain is Antigen TyF1 (177 aa).

The protein belongs to the Dps family. Homodecamer.

The chain is Antigen TyF1 from Treponema pallidum subsp. pertenue (Yaws treponeme).